We begin with the raw amino-acid sequence, 115 residues long: Large ribosomal subunit protein uL22 (115 aa).

Belongs to the universal ribosomal protein uL22 family. In terms of assembly, part of the 50S ribosomal subunit.

Its function is as follows. This protein binds specifically to 23S rRNA; its binding is stimulated by other ribosomal proteins, e.g. L4, L17, and L20. It is important during the early stages of 50S assembly. It makes multiple contacts with different domains of the 23S rRNA in the assembled 50S subunit and ribosome. The globular domain of the protein is located near the polypeptide exit tunnel on the outside of the subunit, while an extended beta-hairpin is found that lines the wall of the exit tunnel in the center of the 70S ribosome. In Enterococcus faecalis (strain ATCC 700802 / V583), this protein is Large ribosomal subunit protein uL22.